Here is a 1336-residue protein sequence, read N- to C-terminus: pre-mRNA 3' end processing protein WDR33 (1336 aa).

Position 2 is an N-acetylalanine (Ala-2). Ser-7 bears the Phosphoserine mark. Lys-46 bears the N6-acetyllysine mark. WD repeat units lie at residues 117–156, 159–198, 200–239, 242–283, 286–325, 329–369, and 373–412; these read KVKC…FETI, AHDS…VKMF, AHKE…EERI, GHGA…SLAT, AHKN…EELQ, GHKK…EVGG, and AHEG…DKMR. Glycyl lysine isopeptide (Lys-Gly) (interchain with G-Cter in SUMO2) cross-links involve residues Lys-526, Lys-530, and Lys-560. The disordered stretch occupies residues 568 to 1336; the sequence is QVEQIQPPPS…GASRGGGRGR (769 aa). Over residues 573–590 the composition is skewed to pro residues; it reads QPPPSSGTPLLGPQPFPG. Residues 594–607 are compositionally biased toward polar residues; that stretch reads MSQIPQGFQQPHPS. Positions 608 to 643 are enriched in low complexity; the sequence is QQMPMNMAQMGPPGPQGQFRPPGPQGQMGPQGPPLH. The Collagen-like domain occupies 618 to 770; sequence GPPGPQGQFR…GPGSQGIQGP (153 aa). Over residues 683–695 the composition is skewed to pro residues; sequence PHGPLGPQGPPGP. Composition is skewed to low complexity over residues 696–707 and 726–751; these read QGSSGPQGHMGP and QGHL…GMQG. Arg-782 carries the post-translational modification Omega-N-methylarginine. The segment covering 854 to 869 has biased composition (low complexity); the sequence is GPPGSQSQQGPPQGSL. The residue at position 915 (Arg-915) is an Asymmetric dimethylarginine. The segment covering 932–941 has biased composition (low complexity); sequence PGLGQQGAQG. 2 stretches are compositionally biased toward basic and acidic residues: residues 971–989 and 998–1034; these read SERR…ERGP and GPPD…EFEG. Arg-987 is modified (omega-N-methylarginine). The residue at position 1035 (Arg-1035) is an Omega-N-methylarginine. 2 stretches are compositionally biased toward basic and acidic residues: residues 1056-1068 and 1078-1122; these read PDHR…DGRG and EGRR…RGRD. Residues 1130 to 1140 show a composition bias toward acidic residues; sequence FGPEENFDASE. Positions 1141 to 1150 are enriched in basic and acidic residues; that stretch reads EAARGRDLRG. Over residues 1151-1160 the composition is skewed to basic residues; the sequence is RGRGTPRGGR. Composition is skewed to basic and acidic residues over residues 1169-1217 and 1242-1259; these read EFPR…RERS and SEHR…DRGG. Ser-1210 carries the post-translational modification Phosphoserine. Arg-1262 is subject to Omega-N-methylarginine. Over residues 1281 to 1293 the composition is skewed to basic and acidic residues; that stretch reads DGEHHDGYHRDEP. Low complexity predominate over residues 1301–1326; that stretch reads GTPSRGGRSGSNWGRGSNMNSGPPRR. An Asymmetric dimethylarginine; alternate modification is found at Arg-1315. Residue Arg-1315 is modified to Omega-N-methylarginine; alternate.

This sequence belongs to the WD repeat WDR33 family. As to quaternary structure, component of the cleavage and polyadenylation specificity factor (CPSF) module of the pre-mRNA 3'-end processing complex. Interacts with CPSF3/CPSF73. Most highly expressed in testis.

It localises to the nucleus. Its function is as follows. Essential for both cleavage and polyadenylation of pre-mRNA 3' ends. The chain is pre-mRNA 3' end processing protein WDR33 (WDR33) from Homo sapiens (Human).